Consider the following 266-residue polypeptide: L-aspartate dehydrogenase (266 aa).

The NAD(+) site is built by Ala123 and Asn189. His219 is an active-site residue.

It belongs to the L-aspartate dehydrogenase family.

It carries out the reaction L-aspartate + NADP(+) + H2O = oxaloacetate + NH4(+) + NADPH + H(+). It catalyses the reaction L-aspartate + NAD(+) + H2O = oxaloacetate + NH4(+) + NADH + H(+). Its pathway is cofactor biosynthesis; NAD(+) biosynthesis; iminoaspartate from L-aspartate (dehydrogenase route): step 1/1. Its function is as follows. Specifically catalyzes the NAD or NADP-dependent dehydrogenation of L-aspartate to iminoaspartate. The sequence is that of L-aspartate dehydrogenase from Cupriavidus necator (strain ATCC 17699 / DSM 428 / KCTC 22496 / NCIMB 10442 / H16 / Stanier 337) (Ralstonia eutropha).